The sequence spans 537 residues: Aminopeptidase Y (537 aa).

Residues Met-1–Ala-21 form the signal peptide. The propeptide occupies Tyr-22–Asn-56. N-linked (GlcNAc...) asparagine glycans are attached at residues Asn-85, Asn-96, Asn-115, Asn-150, and Asn-162. 2 residues coordinate Zn(2+): His-314 and Asp-326. Glu-358 functions as the Proton acceptor in the catalytic mechanism. Glu-359 serves as a coordination point for Zn(2+). A glycan (N-linked (GlcNAc...) asparagine) is linked at Asn-371. Asp-387 is a binding site for Zn(2+). The N-linked (GlcNAc...) asparagine glycan is linked to Asn-427. Zn(2+) is bound at residue His-472. N-linked (GlcNAc...) asparagine glycosylation is present at Asn-480.

Belongs to the peptidase M28 family. M28A subfamily. As to quaternary structure, monomer. It depends on Zn(2+) as a cofactor.

The protein resides in the vacuole. The enzyme catalyses Preferentially, release of N-terminal lysine.. The sequence is that of Aminopeptidase Y (APE3) from Saccharomyces cerevisiae (strain ATCC 204508 / S288c) (Baker's yeast).